We begin with the raw amino-acid sequence, 286 residues long: Nucleotide-binding protein HAPS_0087 (286 aa).

Residue 8–15 (GRSGSGKS) participates in ATP binding. GTP is bound at residue 56-59 (DVRN).

This sequence belongs to the RapZ-like family.

Functionally, displays ATPase and GTPase activities. The sequence is that of Nucleotide-binding protein HAPS_0087 from Glaesserella parasuis serovar 5 (strain SH0165) (Haemophilus parasuis).